We begin with the raw amino-acid sequence, 400 residues long: Subtilisin-like protease 11 (400 aa).

A signal peptide spans 1-19 (MGLFKVIFTAVAALSAVDA). Positions 20–117 (AELLSSAKSK…VEHDRHVYIS (98 aa)) are excised as a propeptide. The Inhibitor I9 domain occupies 35–116 (SYLVVMKDSV…FVEHDRHVYI (82 aa)). A Peptidase S8 domain is found at 127 to 400 (SWGLGRVSHR…NKLLYNRSGK (274 aa)). Residue N138 is glycosylated (N-linked (GlcNAc...) asparagine). The active-site Charge relay system is D159. N-linked (GlcNAc...) asparagine glycosylation is present at N181. H191 functions as the Charge relay system in the catalytic mechanism. N252 and N337 each carry an N-linked (GlcNAc...) asparagine glycan. The Charge relay system role is filled by S346. 2 N-linked (GlcNAc...) asparagine glycosylation sites follow: N388 and N396.

The protein belongs to the peptidase S8 family.

It localises to the secreted. In terms of biological role, secreted subtilisin-like serine protease with keratinolytic activity that contributes to pathogenicity. The chain is Subtilisin-like protease 11 (SUB11) from Trichophyton verrucosum (strain HKI 0517).